A 126-amino-acid chain; its full sequence is Fluoride-specific ion channel FluC (126 aa).

4 helical membrane passes run 3–23, 35–55, 68–88, and 103–123; these read LSILAVGIGGALGSLFRWFLG, LGTLASNVIAGYIIGAAVAYF, FIITGLMGGLSTFSTFSAEVV, and IAIHVTASVIATVLGITTVAV. 2 residues coordinate Na(+): Gly-75 and Ser-78.

The protein belongs to the fluoride channel Fluc/FEX (TC 1.A.43) family.

Its subcellular location is the cell inner membrane. It catalyses the reaction fluoride(in) = fluoride(out). Na(+) is not transported, but it plays an essential structural role and its presence is essential for fluoride channel function. Functionally, fluoride-specific ion channel. Important for reducing fluoride concentration in the cell, thus reducing its toxicity. The protein is Fluoride-specific ion channel FluC of Paraburkholderia phymatum (strain DSM 17167 / CIP 108236 / LMG 21445 / STM815) (Burkholderia phymatum).